The primary structure comprises 113 residues: Iron-sulfur cluster insertion protein ErpA (113 aa).

Iron-sulfur cluster is bound by residues Cys-41, Cys-105, and Cys-107.

It belongs to the HesB/IscA family. Homodimer. The cofactor is iron-sulfur cluster.

In terms of biological role, required for insertion of 4Fe-4S clusters for at least IspG. The protein is Iron-sulfur cluster insertion protein ErpA of Mannheimia succiniciproducens (strain KCTC 0769BP / MBEL55E).